The chain runs to 1292 residues: Putative late blight resistance protein homolog R1C-3 (1292 aa).

Coiled-coil stretches lie at residues 394-414 (DSLA…ESMQ) and 505-526 (RMNE…KLLN). An NB-ARC domain is found at 505–792 (RMNEEIVGFE…SESFVKSCEG (288 aa)). Residue 538-545 (GMPGLGKT) coordinates ATP. LRR repeat units lie at residues 842–865 (AEEN…VYSH), 920–944 (FKFL…LFYL), 963–991 (LWNL…VWDM), 1066–1089 (PIRL…CISA), 1094–1113 (YLEL…TADH), 1114–1142 (LKHL…MFPQ), and 1163–1187 (FPNL…FMDI). The HMA domain occupies 1211-1278 (ETQVEDNQNT…KLRNVAYADE (68 aa)).

It belongs to the disease resistance NB-LRR family.

The protein localises to the cytoplasm. It is found in the membrane. Its function is as follows. Confers resistance to late blight (Phytophthora infestans) races carrying the avirulence gene Avr1. Resistance proteins guard the plant against pathogens that contain an appropriate avirulence protein via an indirect interaction with this avirulence protein. That triggers a defense system including the hypersensitive response, which restricts the pathogen growth. This is Putative late blight resistance protein homolog R1C-3 (R1C-3) from Solanum demissum (Wild potato).